The sequence spans 510 residues: D-alanine--D-alanyl carrier protein ligase (510 aa).

157–158 (TS) is an ATP binding site. Asp-202 is a D-alanine binding site. Position 297 to 302 (297 to 302 (NTYGPT)) interacts with ATP. Position 306 (Val-306) interacts with D-alanine. ATP contacts are provided by Asp-389 and Lys-498. D-alanine is bound at residue Lys-498.

This sequence belongs to the ATP-dependent AMP-binding enzyme family. DltA subfamily.

Its subcellular location is the cytoplasm. The catalysed reaction is holo-[D-alanyl-carrier protein] + D-alanine + ATP = D-alanyl-[D-alanyl-carrier protein] + AMP + diphosphate. The protein operates within cell wall biogenesis; lipoteichoic acid biosynthesis. In terms of biological role, catalyzes the first step in the D-alanylation of lipoteichoic acid (LTA), the activation of D-alanine and its transfer onto the D-alanyl carrier protein (Dcp) DltC. In an ATP-dependent two-step reaction, forms a high energy D-alanyl-AMP intermediate, followed by transfer of the D-alanyl residue as a thiol ester to the phosphopantheinyl prosthetic group of the Dcp. D-alanylation of LTA plays an important role in modulating the properties of the cell wall in Gram-positive bacteria, influencing the net charge of the cell wall. This Listeria welshimeri serovar 6b (strain ATCC 35897 / DSM 20650 / CCUG 15529 / CIP 8149 / NCTC 11857 / SLCC 5334 / V8) protein is D-alanine--D-alanyl carrier protein ligase.